A 279-amino-acid chain; its full sequence is 3-methyl-2-oxobutanoate hydroxymethyltransferase (279 aa).

Residues Asp-43 and Asp-82 each coordinate Mg(2+). Residues 43 to 44 (DS), Asp-82, and Lys-112 contribute to the 3-methyl-2-oxobutanoate site. Glu-114 contacts Mg(2+). Residue Glu-181 is the Proton acceptor of the active site.

It belongs to the PanB family. In terms of assembly, homodecamer; pentamer of dimers. The cofactor is Mg(2+).

Its subcellular location is the cytoplasm. It catalyses the reaction 3-methyl-2-oxobutanoate + (6R)-5,10-methylene-5,6,7,8-tetrahydrofolate + H2O = 2-dehydropantoate + (6S)-5,6,7,8-tetrahydrofolate. The protein operates within cofactor biosynthesis; (R)-pantothenate biosynthesis; (R)-pantoate from 3-methyl-2-oxobutanoate: step 1/2. In terms of biological role, catalyzes the reversible reaction in which hydroxymethyl group from 5,10-methylenetetrahydrofolate is transferred onto alpha-ketoisovalerate to form ketopantoate. This Bacillus anthracis (strain A0248) protein is 3-methyl-2-oxobutanoate hydroxymethyltransferase.